Consider the following 148-residue polypeptide: Glutaredoxin-C10 (148 aa).

The disordered stretch occupies residues 16–55 (TLDLTVHPPPPPPLPPPAPSTVSSSTASTSLSFDEEETSE). Over residues 22 to 34 (HPPPPPPLPPPAP) the composition is skewed to pro residues. Low complexity predominate over residues 35–47 (STVSSSTASTSLS). In terms of domain architecture, Glutaredoxin spans 55–147 (ESKIGRLISE…PRLVEVGALW (93 aa)). A disulfide bridge links cysteine 76 with cysteine 79.

The protein belongs to the glutaredoxin family. CC-type subfamily.

It is found in the cytoplasm. Has a glutathione-disulfide oxidoreductase activity in the presence of NADPH and glutathione reductase. Reduces low molecular weight disulfides and proteins. In Arabidopsis thaliana (Mouse-ear cress), this protein is Glutaredoxin-C10 (GRXC10).